The following is a 147-amino-acid chain: Large ribosomal subunit protein uL15 (147 aa).

Positions 1-42 are disordered; it reads MTIKVHHLRPAPGAKTAKTRVGRGEGSKGKTAGRGTKGSKAR.

It belongs to the universal ribosomal protein uL15 family. Part of the 50S ribosomal subunit.

Functionally, binds to the 23S rRNA. This is Large ribosomal subunit protein uL15 from Salinispora arenicola (strain CNS-205).